The chain runs to 406 residues: Endoplasmic reticulum resident protein 44 (406 aa).

The N-terminal stretch at 1-29 (MHPAVFLSLPDLRCSLLLLVTWVFTPVTT) is a signal peptide. The 109-residue stretch at 30–138 (EITSLDTENI…VKALADYIRQ (109 aa)) folds into the Thioredoxin domain. Intrachain disulfides connect cysteine 189-cysteine 241 and cysteine 301-cysteine 318. The interaction with ITPR1 stretch occupies residues 236-285 (WIQDKCVPLVREITFENGEELTEEGLPFLILFHMKEDTESLEIFQNEVAR). The disordered stretch occupies residues 360–387 (FHHGPDPTDTAPGEQAQDVASSPPESSF). Over residues 377–387 (DVASSPPESSF) the composition is skewed to polar residues. A Prevents secretion from ER motif is present at residues 403–406 (RDEL).

As to quaternary structure, forms mixed disulfides with both ERO1A and ERO1B and cargo folding intermediates; the interactions with ERO1A and ERO1B result in their retention in the endoplasmic reticulum. Directly interacts with ITPR1 in a pH-, redox state- and calcium-dependent manner, but not with ITPR2 or ITPR3. The strength of this interaction inversely correlates with calcium concentration.

It is found in the endoplasmic reticulum lumen. In terms of biological role, mediates thiol-dependent retention in the early secretory pathway, forming mixed disulfides with substrate proteins through its conserved CRFS motif. Inhibits the calcium channel activity of ITPR1. May have a role in the control of oxidative protein folding in the endoplasmic reticulum. Required to retain ERO1A and ERO1B in the endoplasmic reticulum. In Homo sapiens (Human), this protein is Endoplasmic reticulum resident protein 44 (ERP44).